A 201-amino-acid chain; its full sequence is UPF0301 protein R00917 (201 aa).

Belongs to the UPF0301 (AlgH) family.

This chain is UPF0301 protein R00917, found in Rhizobium meliloti (strain 1021) (Ensifer meliloti).